Reading from the N-terminus, the 155-residue chain is MKVEIDSFSGAKIYPGRGTLFVRGDSKVFRFHSSKSASLFHQRKNPRRIAWTVLYRRHHKKGITEEVAKKRSRKTVKAQRAVVGASLELIKERRSLKPEIRKAKRDEKAKADKEKKKADKAARKADKAKSAATQASKISKQQAKGAFQKVAATSR.

Residues 97-129 (KPEIRKAKRDEKAKADKEKKKADKAARKADKAK) are compositionally biased toward basic and acidic residues. Residues 97–155 (KPEIRKAKRDEKAKADKEKKKADKAARKADKAKSAATQASKISKQQAKGAFQKVAATSR) are disordered. Residues 133-142 (TQASKISKQQ) show a composition bias toward polar residues.

It belongs to the eukaryotic ribosomal protein eL24 family.

The sequence is that of Large ribosomal subunit protein eL24 (RPL24) from Eremothecium gossypii (strain ATCC 10895 / CBS 109.51 / FGSC 9923 / NRRL Y-1056) (Yeast).